The sequence spans 338 residues: Nicotinate-nucleotide--dimethylbenzimidazole phosphoribosyltransferase (338 aa).

E305 acts as the Proton acceptor in catalysis.

This sequence belongs to the CobT family.

The catalysed reaction is 5,6-dimethylbenzimidazole + nicotinate beta-D-ribonucleotide = alpha-ribazole 5'-phosphate + nicotinate + H(+). The protein operates within nucleoside biosynthesis; alpha-ribazole biosynthesis; alpha-ribazole from 5,6-dimethylbenzimidazole: step 1/2. Catalyzes the synthesis of alpha-ribazole-5'-phosphate from nicotinate mononucleotide (NAMN) and 5,6-dimethylbenzimidazole (DMB). The protein is Nicotinate-nucleotide--dimethylbenzimidazole phosphoribosyltransferase of Sinorhizobium medicae (strain WSM419) (Ensifer medicae).